The chain runs to 488 residues: NADH-quinone oxidoreductase subunit N (488 aa).

14 consecutive transmembrane segments (helical) span residues 15–35 (LALP…VDLY), 42–62 (GMTF…AIVA), 79–99 (NLAA…FAYC), 108–128 (LLKG…MIMA), 133–153 (LMTV…MVAF), 168–188 (FVLG…IYGA), 209–229 (WLLL…FGAV), 243–263 (PTTV…ALFV), 277–297 (WQPM…LAAL), 305–325 (MLAY…IAGT), 333–353 (LFYA…IILL), 376–396 (MALM…TVGF), 409–429 (VGLV…AFYY), and 456–476 (GLLV…DSLI).

It belongs to the complex I subunit 2 family. NDH-1 is composed of 14 different subunits. Subunits NuoA, H, J, K, L, M, N constitute the membrane sector of the complex.

Its subcellular location is the cell inner membrane. The catalysed reaction is a quinone + NADH + 5 H(+)(in) = a quinol + NAD(+) + 4 H(+)(out). In terms of biological role, NDH-1 shuttles electrons from NADH, via FMN and iron-sulfur (Fe-S) centers, to quinones in the respiratory chain. The immediate electron acceptor for the enzyme in this species is believed to be ubiquinone. Couples the redox reaction to proton translocation (for every two electrons transferred, four hydrogen ions are translocated across the cytoplasmic membrane), and thus conserves the redox energy in a proton gradient. This chain is NADH-quinone oxidoreductase subunit N, found in Alkalilimnicola ehrlichii (strain ATCC BAA-1101 / DSM 17681 / MLHE-1).